Reading from the N-terminus, the 755-residue chain is MGRTLYDKVWDDHVVDQQEDGTCLIYIDRHLVHEVTSPQAFEGLRNAGRKVRRPDCTLATVDHNIPTTPRKNFKNVSTFIQEADSRTQCETLEHNVKEFGLTYFGMDDSRQGIVHVIGPEQGFTLPGCTVNCGDSHTSTHGAFGALAFGIGTSEVEHVLATQTLLQKKSKNMRVKVDGKLAPGVTSKDIVLHIIGVIGTAGGTGCVIEFCGSAFEQMSMEARMSVCNMSIEAGARAGMIAPDETTFEYIRGRPLAPTGAEWDKAVEYWRSLRSDPDAKYDVDVFIDAADIAPTLTWGTSPQDVVAITGTTPDPSTVSDPIRRQAMERALDYIGLKPNTPMQEVKIDKVFIGSCTNSRIEDLRAAAAIAKGRHVADWVYAMVVPGSGLVKKQAEQEGLDRIFKEAGFDWREAGCSMCLGMNPDQLKPGERCASTSNRNFEGRQGAGGRTHLMSPAMAAAAAVTGYFTDVRKLTPAQQDRPASPTPKKIETELEPPVEDHAKAADQADIVTDAPATGASPPSPAPSDAAGMPKFTTLRGYAAPLDIANVDTDMIIPKQFLKTIKRTGLGTALFYNIRFDGATGEENPDFVLNQEPYRQSRILVCTGPNFGCGSSREHAPWAFNDFGIRSIIAPSFADIFFNNCFKNGMLPITLPQDKVEMLAEHAKQKAELEVDLVNQVVRYPGGEVPFDVEPFRKHCLVNGLDDIGLTMQKADLIEAFEAKRSQTWPWLDGKDYAGKATKFTPVATNTAKKQKLDW.

Residues Cys353, Cys413, and Cys416 each contribute to the [4Fe-4S] cluster site. Disordered stretches follow at residues 427 to 446, 471 to 493, and 510 to 529; these read GERC…GAGG, LTPA…ELEP, and DAPA…AAGM. The segment covering 510-528 has biased composition (low complexity); it reads DAPATGASPPSPAPSDAAG.

This sequence belongs to the aconitase/IPM isomerase family. As to quaternary structure, monomer. The cofactor is [4Fe-4S] cluster.

It carries out the reaction (2R,3S)-3-isopropylmalate = (2S)-2-isopropylmalate. It participates in amino-acid biosynthesis; L-leucine biosynthesis; L-leucine from 3-methyl-2-oxobutanoate: step 2/4. Functionally, catalyzes the isomerization between 2-isopropylmalate and 3-isopropylmalate, via the formation of 2-isopropylmaleate. In Rhizomucor pusillus, this protein is 3-isopropylmalate dehydratase (LEUA).